Here is a 312-residue protein sequence, read N- to C-terminus: Probable deoxyhypusine synthase (312 aa).

Lysine 285 acts as the Nucleophile in catalysis.

It belongs to the deoxyhypusine synthase family. NAD(+) serves as cofactor.

The catalysed reaction is [eIF5A protein]-L-lysine + spermidine = [eIF5A protein]-deoxyhypusine + propane-1,3-diamine. It participates in protein modification; eIF5A hypusination. Functionally, catalyzes the NAD-dependent oxidative cleavage of spermidine and the subsequent transfer of the butylamine moiety of spermidine to the epsilon-amino group of a specific lysine residue of the eIF-5A precursor protein to form the intermediate deoxyhypusine residue. This Saccharolobus islandicus (strain M.16.4 / Kamchatka #3) (Sulfolobus islandicus) protein is Probable deoxyhypusine synthase.